We begin with the raw amino-acid sequence, 684 residues long: Cleavage and polyadenylation specificity factor subunit 3 (684 aa).

Serine 2 is modified (N-acetylserine). Zn(2+)-binding residues include histidine 71, histidine 73, aspartate 75, histidine 76, histidine 158, and aspartate 179. Histidine 396 serves as the catalytic Proton donor. Histidine 418 is a Zn(2+) binding site. Glycyl lysine isopeptide (Lys-Gly) (interchain with G-Cter in SUMO) cross-links involve residues lysine 462, lysine 465, and lysine 545. The residue at position 659 (serine 659) is a Phosphoserine. Phosphothreonine is present on threonine 681.

It belongs to the metallo-beta-lactamase superfamily. RNA-metabolizing metallo-beta-lactamase-like family. CPSF3 subfamily. Component of the cleavage and polyadenylation specificity factor (CPSF) complex, composed of CPSF1, CPSF2, CPSF3, CPSF4 and FIP1L1. Interacts with CPSF2, CSTF2 and SYMPK. Interacts with TUT1; the interaction is direct and mediates the recruitment of the CPSF complex on the 3'UTR of pre-mRNAs. Interacts with WDR33. Interacts with ZC3H3. Zn(2+) is required as a cofactor. Sumoylated on Lys-462, Lys-465 and Lys-545, preferentially by SUMO3.

It is found in the nucleus. In terms of biological role, component of the cleavage and polyadenylation specificity factor (CPSF) complex that plays a key role in pre-mRNA 3'-end formation, recognizing the AAUAAA signal sequence and interacting with poly(A) polymerase and other factors to bring about cleavage and poly(A) addition. Has endonuclease activity, and functions as an mRNA 3'-end-processing endonuclease. Also involved in the histone 3'-end pre-mRNA processing. U7 snRNP-dependent protein that induces both the 3'-endoribonucleolytic cleavage of histone pre-mRNAs and acts as a 5' to 3' exonuclease for degrading the subsequent downstream cleavage product (DCP) of mature histone mRNAs. Cleavage occurs after the 5'-ACCCA-3' sequence in the histone pre-mRNA leaving a 3'hydroxyl group on the upstream fragment containing the stem loop (SL) and 5' phosphate on the downstream cleavage product (DCP) starting with CU nucleotides. The U7-dependent 5' to 3' exonuclease activity is processive and degrades the DCP RNA substrate even after complete removal of the U7-binding site. Binds to the downstream cleavage product (DCP) of histone pre-mRNAs and the cleaved DCP RNA substrate in a U7 snRNP dependent manner. Required for entering/progressing through S-phase of the cell cycle. Required for the selective processing of microRNAs (miRNAs) during embryonic stem cell differentiation via its interaction with ISY1. Required for the biogenesis of all miRNAs from the pri-miR-17-92 primary transcript except miR-92a. Only required for the biogenesis of miR-290 and miR-96 from the pri-miR-290-295 and pri-miR-96-183 primary transcripts, respectively. This chain is Cleavage and polyadenylation specificity factor subunit 3 (CPSF3), found in Bos taurus (Bovine).